Reading from the N-terminus, the 418-residue chain is Bifunctional enzyme IspD/IspF (418 aa).

The segment at 1 to 261 (MADTPALIPQ…EFKRASDMNF (261 aa)) is 2-C-methyl-D-erythritol 4-phosphate cytidylyltransferase. The segment at 262 to 418 (RIGEGWDIHA…RATVLLRKFI (157 aa)) is 2-C-methyl-D-erythritol 2,4-cyclodiphosphate synthase. Residues Asp-268 and His-270 each coordinate a divalent metal cation. Residues 268 to 270 (DIH) and 294 to 295 (HS) each bind 4-CDP-2-C-methyl-D-erythritol 2-phosphate. His-302 is a binding site for a divalent metal cation. 4-CDP-2-C-methyl-D-erythritol 2-phosphate is bound by residues 316–318 (DIG) and 321–325 (FPDTD).

It in the N-terminal section; belongs to the IspD/TarI cytidylyltransferase family. IspD subfamily. This sequence in the C-terminal section; belongs to the IspF family. A divalent metal cation serves as cofactor.

It carries out the reaction 2-C-methyl-D-erythritol 4-phosphate + CTP + H(+) = 4-CDP-2-C-methyl-D-erythritol + diphosphate. It catalyses the reaction 4-CDP-2-C-methyl-D-erythritol 2-phosphate = 2-C-methyl-D-erythritol 2,4-cyclic diphosphate + CMP. It functions in the pathway isoprenoid biosynthesis; isopentenyl diphosphate biosynthesis via DXP pathway; isopentenyl diphosphate from 1-deoxy-D-xylulose 5-phosphate: step 2/6. The protein operates within isoprenoid biosynthesis; isopentenyl diphosphate biosynthesis via DXP pathway; isopentenyl diphosphate from 1-deoxy-D-xylulose 5-phosphate: step 4/6. Bifunctional enzyme that catalyzes the formation of 4-diphosphocytidyl-2-C-methyl-D-erythritol from CTP and 2-C-methyl-D-erythritol 4-phosphate (MEP) (IspD), and catalyzes the conversion of 4-diphosphocytidyl-2-C-methyl-D-erythritol 2-phosphate (CDP-ME2P) to 2-C-methyl-D-erythritol 2,4-cyclodiphosphate (ME-CPP) with a corresponding release of cytidine 5-monophosphate (CMP) (IspF). The chain is Bifunctional enzyme IspD/IspF from Albidiferax ferrireducens (strain ATCC BAA-621 / DSM 15236 / T118) (Rhodoferax ferrireducens).